Consider the following 670-residue polypeptide: DNA-binding transcriptional activator HyfR (670 aa).

The region spanning 169–311 (DLDDLIADVA…HIADRIAIAV (143 aa)) is the GAF domain. The short motif at 207–221 (CSDLSASHCACLPRC) is the Cys-rich segment, might bind a metal cluster element. The Sigma-54 factor interaction domain maps to 347-576 (IIYQSQAMED…LENVIERAVL (230 aa)). ATP contacts are provided by residues 375-382 (GETGTGKE) and 438-447 (ADGGTLFLDE). Positions 641–660 (PRGAATRLGMKRTTLLSRMQ) form a DNA-binding region, H-T-H motif.

Functionally, a transcriptional activator of its own operon; when overexpressed operon expression is strongly enhanced by low pH (under pH 6.0), strongly inhibited by O(2) but only weakly stimulated by fumarate. Expression in situ is very weak. This is DNA-binding transcriptional activator HyfR from Escherichia coli (strain K12).